Consider the following 168-residue polypeptide: MAVLSGDEIRKLIQKEGLIRDYVDLETQIQPNGFDCTLRSVYRLRGCGRVDFDNSRRELPELEEVEFRDWVYLPKGVYRAKLNEVVRLGNDIMAIARPRSTLIRCGANVLTAVWDAGYEGRSEVSIVVHNDYGIWLSRNARIIQLVFIRLSSPTKGYEGVYKGENIDS.

Belongs to the dCTP deaminase family. Archaeal dUTPase subfamily.

It catalyses the reaction dUTP + H2O = dUMP + diphosphate + H(+). It participates in pyrimidine metabolism; dUMP biosynthesis; dUMP from dCTP (dUTP route): step 2/2. Its function is as follows. This enzyme is involved in nucleotide metabolism: it produces dUMP, the immediate precursor of thymidine nucleotides and it decreases the intracellular concentration of dUTP so that uracil cannot be incorporated into DNA. This is Probable deoxyuridine 5'-triphosphate nucleotidohydrolase from Archaeoglobus fulgidus (strain ATCC 49558 / DSM 4304 / JCM 9628 / NBRC 100126 / VC-16).